We begin with the raw amino-acid sequence, 583 residues long: Nuclear distribution protein nudE homolog 1 (583 aa).

The stretch at 14 to 195 (ATLEDTLGWY…QDKFKKQESR (182 aa)) forms a coiled coil. Disordered stretches follow at residues 34 to 68 (LAEFRDSSRELEQELEKDIERAEKQERHHQEKAET), 211 to 339 (TFDG…TSNS), and 358 to 583 (HSVR…GETY). The span at 35 to 67 (AEFRDSSRELEQELEKDIERAEKQERHHQEKAE) shows a compositional bias: basic and acidic residues. Composition is skewed to polar residues over residues 219-235 (PGSTASSPLITTPTDSK), 279-319 (RSRL…TMRT), 329-339 (SASNKLPTSNS), 379-392 (NVYSATNMPASITI), and 399-422 (SGSAASSVTGDDPTPTNIPTSTPK). The span at 453 to 469 (RPSSRASTSYATSYARP) shows a compositional bias: low complexity. Residues 529–538 (RRGTYSSQGG) show a composition bias toward polar residues.

The protein belongs to the nudE family. As to quaternary structure, self-associates. Interacts with PAC1.

It is found in the cytoplasm. It localises to the cytoskeleton. Its function is as follows. Required for nuclear migration. This chain is Nuclear distribution protein nudE homolog 1 (NDE1), found in Gibberella zeae (strain ATCC MYA-4620 / CBS 123657 / FGSC 9075 / NRRL 31084 / PH-1) (Wheat head blight fungus).